Reading from the N-terminus, the 317-residue chain is tRNA dimethylallyltransferase (317 aa).

Residue 16–23 (GPTASGKS) coordinates ATP. Residue 18–23 (TASGKS) participates in substrate binding. Interaction with substrate tRNA stretches follow at residues 41–44 (DSAQ), 165–169 (QRIQR), and 247–252 (RCVGYR).

It belongs to the IPP transferase family. As to quaternary structure, monomer. Requires Mg(2+) as cofactor.

It catalyses the reaction adenosine(37) in tRNA + dimethylallyl diphosphate = N(6)-dimethylallyladenosine(37) in tRNA + diphosphate. Its function is as follows. Catalyzes the transfer of a dimethylallyl group onto the adenine at position 37 in tRNAs that read codons beginning with uridine, leading to the formation of N6-(dimethylallyl)adenosine (i(6)A). This is tRNA dimethylallyltransferase from Nitrosomonas europaea (strain ATCC 19718 / CIP 103999 / KCTC 2705 / NBRC 14298).